The following is a 371-amino-acid chain: Protein STRICTOSIDINE SYNTHASE-LIKE 7 (371 aa).

Positions 1 to 25 (MPVLFSSRSLILSIIVPLLISIALY) are cleaved as a signal peptide. 3 N-linked (GlcNAc...) asparagine glycosylation sites follow: asparagine 101, asparagine 137, and asparagine 285. Residue tyrosine 303 is modified to Phosphotyrosine.

The protein belongs to the strictosidine synthase family.

It localises to the vacuole. The chain is Protein STRICTOSIDINE SYNTHASE-LIKE 7 from Arabidopsis thaliana (Mouse-ear cress).